Consider the following 714-residue polypeptide: Polyribonucleotide nucleotidyltransferase (714 aa).

Mg(2+) is bound by residues aspartate 496 and aspartate 502. The KH domain maps to 562–621; sequence PRLLTIKIDPDLIGMVIGPGGKTIKGITEQTRAKVDIADDGTVTIASSESENAEKAKRLI. The S1 motif domain maps to 631–699; sequence GDVYFGKVTR…NKGRINLTRL (69 aa).

This sequence belongs to the polyribonucleotide nucleotidyltransferase family. Mg(2+) is required as a cofactor.

It localises to the cytoplasm. It catalyses the reaction RNA(n+1) + phosphate = RNA(n) + a ribonucleoside 5'-diphosphate. Its function is as follows. Involved in mRNA degradation. Catalyzes the phosphorolysis of single-stranded polyribonucleotides processively in the 3'- to 5'-direction. The protein is Polyribonucleotide nucleotidyltransferase of Picosynechococcus sp. (strain ATCC 27264 / PCC 7002 / PR-6) (Agmenellum quadruplicatum).